Consider the following 394-residue polypeptide: Phosphoglycerate kinase (394 aa).

Substrate-binding positions include 21-23 (DFN), Arg-36, 59-62 (HLGR), Arg-118, and Arg-151. Ser-183 carries the phosphoserine modification. The ATP site is built by Lys-201 and Gly-292. Thr-299 bears the Phosphothreonine mark. ATP-binding positions include Glu-323 and 350–353 (GGDS).

Belongs to the phosphoglycerate kinase family. In terms of assembly, monomer.

The protein localises to the cytoplasm. It catalyses the reaction (2R)-3-phosphoglycerate + ATP = (2R)-3-phospho-glyceroyl phosphate + ADP. Its pathway is carbohydrate degradation; glycolysis; pyruvate from D-glyceraldehyde 3-phosphate: step 2/5. The protein is Phosphoglycerate kinase of Bacillus thuringiensis (strain Al Hakam).